The chain runs to 369 residues: Peptide chain release factor 2 (369 aa).

An N5-methylglutamine modification is found at Gln-250.

This sequence belongs to the prokaryotic/mitochondrial release factor family. In terms of processing, methylated by PrmC. Methylation increases the termination efficiency of RF2.

The protein resides in the cytoplasm. Its function is as follows. Peptide chain release factor 2 directs the termination of translation in response to the peptide chain termination codons UGA and UAA. The sequence is that of Peptide chain release factor 2 (prfB) from Rickettsia typhi (strain ATCC VR-144 / Wilmington).